We begin with the raw amino-acid sequence, 329 residues long: Holliday junction branch migration complex subunit RuvB (329 aa).

Positions 1–180 are large ATPase domain (RuvB-L); it reads MKNILQSTEC…FGIPIHLEFY (180 aa). ATP contacts are provided by residues Arg20, Gly61, Lys64, Thr65, Thr66, 127 to 129, Arg170, Tyr180, and Arg217; that span reads EDF. Mg(2+) is bound at residue Thr65. The segment at 181 to 252 is small ATPAse domain (RuvB-S); it reads STEELTKVIQ…FADKALLRLG (72 aa). Residues 255 to 329 form a head domain (RuvB-H) region; it reads KLGLDRQDIQ…ISHLREQEYI (75 aa). Arg308 and Arg313 together coordinate DNA.

The protein belongs to the RuvB family. Homohexamer. Forms an RuvA(8)-RuvB(12)-Holliday junction (HJ) complex. HJ DNA is sandwiched between 2 RuvA tetramers; dsDNA enters through RuvA and exits via RuvB. An RuvB hexamer assembles on each DNA strand where it exits the tetramer. Each RuvB hexamer is contacted by two RuvA subunits (via domain III) on 2 adjacent RuvB subunits; this complex drives branch migration. In the full resolvosome a probable DNA-RuvA(4)-RuvB(12)-RuvC(2) complex forms which resolves the HJ.

It is found in the cytoplasm. It carries out the reaction ATP + H2O = ADP + phosphate + H(+). Its function is as follows. The RuvA-RuvB-RuvC complex processes Holliday junction (HJ) DNA during genetic recombination and DNA repair, while the RuvA-RuvB complex plays an important role in the rescue of blocked DNA replication forks via replication fork reversal (RFR). RuvA specifically binds to HJ cruciform DNA, conferring on it an open structure. The RuvB hexamer acts as an ATP-dependent pump, pulling dsDNA into and through the RuvAB complex. RuvB forms 2 homohexamers on either side of HJ DNA bound by 1 or 2 RuvA tetramers; 4 subunits per hexamer contact DNA at a time. Coordinated motions by a converter formed by DNA-disengaged RuvB subunits stimulates ATP hydrolysis and nucleotide exchange. Immobilization of the converter enables RuvB to convert the ATP-contained energy into a lever motion, pulling 2 nucleotides of DNA out of the RuvA tetramer per ATP hydrolyzed, thus driving DNA branch migration. The RuvB motors rotate together with the DNA substrate, which together with the progressing nucleotide cycle form the mechanistic basis for DNA recombination by continuous HJ branch migration. Branch migration allows RuvC to scan DNA until it finds its consensus sequence, where it cleaves and resolves cruciform DNA. In Ehrlichia chaffeensis (strain ATCC CRL-10679 / Arkansas), this protein is Holliday junction branch migration complex subunit RuvB.